Here is a 540-residue protein sequence, read N- to C-terminus: Signal peptide peptidase-like 2 (540 aa).

The first 27 residues, 1–27 (MDSLRFLRILLLSSSILLLSLRSTVTA), serve as a signal peptide directing secretion. Over 28-196 (GDIVHQDNLA…PRRPAVDVAE (169 aa)) the chain is Lumenal. Asn83 is a glycosylation site (N-linked (GlcNAc...) asparagine). The 79-residue stretch at 95–173 (SCTPLKNKLS…QDAGASLQKM (79 aa)) folds into the PA domain. Residue Asn176 is glycosylated (N-linked (GlcNAc...) asparagine). Residues 197 to 217 (VFLWLMAIGTILCASYWSAWS) traverse the membrane as a helical segment. Residues 218–248 (AREAAIEHDKLLKDAIDEIPNTNDGGSGVVE) lie on the Cytoplasmic side of the membrane. The helical transmembrane segment at 249 to 269 (INSISAIFFVVLASGFLVILY) threads the bilayer. The Lumenal segment spans residues 270 to 278 (KLMSYWFVE). A helical transmembrane segment spans residues 279 to 299 (LLVVVFCIGGVEGLQTCLVAL). The Cytoplasmic segment spans residues 300 to 319 (LSRWFQRAADTYVKVPFLGP). A helical membrane pass occupies residues 320-340 (ISYLTLAVSPFCIVFAVLWAV). Topologically, residues 341–345 (YRVHS) are lumenal. Residues 346 to 366 (FAWIGQDVLGIALIITVLQIV) form a helical membrane-spanning segment. The Cytoplasmic segment spans residues 367–370 (HVPN). Residues 371 to 391 (LKVGTVLLSCAFLYDIFWVFV) form a helical membrane-spanning segment. Asp385 is an active-site residue. Residues 392-429 (SKKLFHESVMIVVARGDKSGEDGIPMLLKIPRMFDPWG) lie on the Lumenal side of the membrane. Residues 430–450 (GYSIIGFGDILLPGLLIAFAL) form a helical membrane-spanning segment. Asp438 is a catalytic residue. The Cytoplasmic portion of the chain corresponds to 451-462 (RYDWLANKTLRT). Residues 463–483 (GYFIWAMVAYGLGLLITYVAL) traverse the membrane as a helical segment. The Lumenal portion of the chain corresponds to 484–488 (NLMDG). Residues 489–509 (HGQPALLYIVPFTLGTMLTLA) traverse the membrane as a helical segment. The PAL signature appears at 492-494 (PAL). At 510-540 (RKRDDLWILWTKGEPERACPHHVRLEQCSEK) the chain is on the cytoplasmic side.

It belongs to the peptidase A22B family. Glycosylated. In terms of tissue distribution, ubiquitous.

The protein localises to the endosome membrane. Its function is as follows. Intramembrane-cleaving aspartic protease (I-CLiP) that cleaves type II membrane signal peptides in the hydrophobic plane of the membrane. This chain is Signal peptide peptidase-like 2 (SPPL2), found in Arabidopsis thaliana (Mouse-ear cress).